The primary structure comprises 145 residues: Nucleoside diphosphate kinase (145 aa).

Lys-11, Phe-59, Arg-87, Thr-93, Arg-104, and Asn-114 together coordinate ATP. His-117 serves as the catalytic Pros-phosphohistidine intermediate.

Belongs to the NDK family. Homotetramer. The cofactor is Mg(2+).

The protein localises to the cytoplasm. The catalysed reaction is a 2'-deoxyribonucleoside 5'-diphosphate + ATP = a 2'-deoxyribonucleoside 5'-triphosphate + ADP. The enzyme catalyses a ribonucleoside 5'-diphosphate + ATP = a ribonucleoside 5'-triphosphate + ADP. Its function is as follows. Major role in the synthesis of nucleoside triphosphates other than ATP. The ATP gamma phosphate is transferred to the NDP beta phosphate via a ping-pong mechanism, using a phosphorylated active-site intermediate. This is Nucleoside diphosphate kinase from Myxococcus xanthus.